The primary structure comprises 716 residues: Putative proline--tRNA ligase C19C7.06 (716 aa).

Positions 655 to 675 are disordered; that stretch reads KNSARQVNGDEPEDEKAPSMG.

This sequence belongs to the class-II aminoacyl-tRNA synthetase family.

The protein resides in the cytoplasm. The catalysed reaction is tRNA(Pro) + L-proline + ATP = L-prolyl-tRNA(Pro) + AMP + diphosphate. This Schizosaccharomyces pombe (strain 972 / ATCC 24843) (Fission yeast) protein is Putative proline--tRNA ligase C19C7.06 (prs1).